The primary structure comprises 294 residues: RAB7A-interacting MON1-CCZ1 complex subunit 1 (294 aa).

Ala2 bears the N-acetylalanine mark.

This sequence belongs to the RIMOC1 family. In terms of assembly, interacts with the MON1A-CCZ1B complex. Interacts with GDP-bound RAB7A and promotes its interaction with the MON1A-CCZ1B complex.

It is found in the cytoplasm. It localises to the cytosol. Functionally, plays an important role in the removal of damaged mitochondria via mitophagy by controlling the stability and localization of RAB7A. Required for the recruitment of RAB7A and ATG9A vesicles to damaged mitochondria and promotes the stability of RAB7A by inhibiting its proteasomal degradation during mitophagy. In Mus musculus (Mouse), this protein is RAB7A-interacting MON1-CCZ1 complex subunit 1.